A 214-amino-acid polypeptide reads, in one-letter code: Proteasome subunit beta type-6 (214 aa).

A propeptide spans 1 to 14 (MEAPEWLDNAVDLG) (removed in mature form). The active-site Nucleophile is the Thr15.

This sequence belongs to the peptidase T1B family. The 26S proteasome consists of a 20S proteasome core and two 19S regulatory subunits. The 20S proteasome core is composed of 28 subunits that are arranged in four stacked rings, resulting in a barrel-shaped structure. The two end rings are each formed by seven alpha subunits, and the two central rings are each formed by seven beta subunits. The catalytic chamber with the active sites is on the inside of the barrel.

It is found in the cytoplasm. Its subcellular location is the nucleus. It carries out the reaction Cleavage of peptide bonds with very broad specificity.. In terms of biological role, the proteasome is a multicatalytic proteinase complex which is characterized by its ability to cleave peptides with Arg, Phe, Tyr, Leu, and Glu adjacent to the leaving group at neutral or slightly basic pH. The proteasome has an ATP-dependent proteolytic activity. This Dictyostelium discoideum (Social amoeba) protein is Proteasome subunit beta type-6 (psmB6).